The sequence spans 447 residues: Transducin beta-like protein 2 (447 aa).

A disordered region spans residues arginine 38–proline 72. Basic residues predominate over residues glycine 57–lysine 69. WD repeat units lie at residues serine 88–histidine 127, valine 134–tyrosine 174, lysine 186–asparagine 226, asparagine 228–glutamine 267, glycine 277–glutamine 316, alanine 329–cysteine 367, and valine 371–valine 409. A Glycyl lysine isopeptide (Lys-Gly) (interchain with G-Cter in SUMO2) cross-link involves residue lysine 168. A Phosphothreonine; by ATM or ATR modification is found at threonine 433.

In Homo sapiens (Human), this protein is Transducin beta-like protein 2 (TBL2).